The following is a 649-amino-acid chain: 1-deoxy-D-xylulose-5-phosphate synthase (649 aa).

Thiamine diphosphate is bound by residues His-84 and 125–127; that span reads GHS. Asp-156 provides a ligand contact to Mg(2+). Residues 157 to 158, Asn-185, Phe-292, and Glu-385 each bind thiamine diphosphate; that span reads GS. Asn-185 provides a ligand contact to Mg(2+).

It belongs to the transketolase family. DXPS subfamily. Homodimer. The cofactor is Mg(2+). Requires thiamine diphosphate as cofactor.

The enzyme catalyses D-glyceraldehyde 3-phosphate + pyruvate + H(+) = 1-deoxy-D-xylulose 5-phosphate + CO2. It functions in the pathway metabolic intermediate biosynthesis; 1-deoxy-D-xylulose 5-phosphate biosynthesis; 1-deoxy-D-xylulose 5-phosphate from D-glyceraldehyde 3-phosphate and pyruvate: step 1/1. In terms of biological role, catalyzes the acyloin condensation reaction between C atoms 2 and 3 of pyruvate and glyceraldehyde 3-phosphate to yield 1-deoxy-D-xylulose-5-phosphate (DXP). This is 1-deoxy-D-xylulose-5-phosphate synthase from Saccharophagus degradans (strain 2-40 / ATCC 43961 / DSM 17024).